The primary structure comprises 35 residues: Mu-theraphotoxin-Ca2a (35 aa).

3 disulfides stabilise this stretch: Cys-2-Cys-17, Cys-9-Cys-24, and Cys-16-Cys-31.

The protein belongs to the neurotoxin 10 (Hwtx-1) family. 10 (haplotoxin-1) subfamily. In terms of tissue distribution, expressed by the venom gland.

The protein localises to the secreted. In terms of biological role, potently inhibits Nav1.7/SCN9A (IC(50)=98.1 nM), and moderately inhibits Nav1.2/SCN2A (IC(50)=216.3 nM), Nav1.6/SCN8A (IC(50)=313.6 nM), and Nav1.3/SCN3A (IC(50)=491.3 nM). Hyperpolarizes the slow inactivation, but does not alter the voltage-dependent activation or fast inactivation of Nav1.7/SCN9A. Binds with Nav1.7/SCN9A at the extracellular S3-S4 linker of domain II (site 4). In vivo, exhibits dose-dependent analgesic efficacy by reducing pain responses in rodent models of formalin-induced paw licking, hot plate test, and acetic acid-induced writhing. This chain is Mu-theraphotoxin-Ca2a, found in Cyriopagopus albostriatus (Cambodian tiger tarantula).